Here is a 235-residue protein sequence, read N- to C-terminus: Glutathione S-transferase 1 (235 aa).

The region spanning 36 to 113 (EKYTLTYFNG…LLGGRFGLLG (78 aa)) is the GST N-terminal domain. Residues tyrosine 42, tryptophan 73, lysine 77, valine 85, and 97–98 (ES) each bind glutathione. The region spanning 115 to 235 (NDWEEAKIMA…WIKKRPKTYF (121 aa)) is the GST C-terminal domain.

This sequence belongs to the GST superfamily. In terms of assembly, homodimer.

It carries out the reaction RX + glutathione = an S-substituted glutathione + a halide anion + H(+). This is Glutathione S-transferase 1 (GST1) from Onchocerca volvulus.